The following is a 681-amino-acid chain: MQNPPQHPEAQSPETRDREFFITAAIDYANGTPHIGHVYEKILADAIARYQRLAGRDVTFVMGTDEHGEKISKAAAKGGVTPQELVDDLSERAFQGLWKKLGISYDFFIRTTSAKHKKYVQDVLQRVYDAGDIYFAEYEGLYSVGAERYVTEKELVEGPDGVRRFPGDKDPPELRREANYFFNMQKYQPWLLETLQQNPDLIQPAGYRNEVLEMLKEDIGPLSISRPKARVPWGIELPWDTDHVTYVWFDALLSYLTPLVSQGQDASMSGKAWHVIGKDILKPHAVFWPTMLRAAGLPLYRRLVVHSHILAEDGRKMGKSLGNAIDPEELVAAWPVDAIRYALLREASLGADSPFGEGVLVSRLNSDLANDLGNLLSRTVSMIQKYRGGVIPAATEPTDREREIEAAARALPDEVLRLVDELKINMAIDAAMSFVRDLNRYIAESTPWTLAKSPETQGRLDTVLYTAAEGLRVASVALEAVIPTKAKELREQLGLGRQGYPLQAAWGLTPAGTRVQGGAILFPKPEPKADETKNAEAKPPKPQAKKEKKTVTDTAPAKTTEQKPEAAAPAQNDGLISIDDFAKIDLRIAEVVACEAVEKADKLLKLTVKLGDETRTVVSGIRKWYEPEALVGRKVVLVANLKPAKLRGIESQGMILAAEDDAGNLDLVGTELDLPSGTKVR.

A 'HIGH' region motif is present at residues 27–37 (DYANGTPHIGH). The short motif at 316 to 320 (KMGKS) is the 'KMSKS' region element. Lysine 319 provides a ligand contact to ATP. Positions 522–571 (FPKPEPKADETKNAEAKPPKPQAKKEKKTVTDTAPAKTTEQKPEAAAPAQ) are disordered. The segment covering 525 to 539 (PEPKADETKNAEAKP) has biased composition (basic and acidic residues). The tRNA-binding domain maps to 580-681 (DFAKIDLRIA…LDLPSGTKVR (102 aa)).

The protein belongs to the class-I aminoacyl-tRNA synthetase family. MetG type 2B subfamily. As to quaternary structure, homodimer.

It localises to the cytoplasm. It carries out the reaction tRNA(Met) + L-methionine + ATP = L-methionyl-tRNA(Met) + AMP + diphosphate. In terms of biological role, is required not only for elongation of protein synthesis but also for the initiation of all mRNA translation through initiator tRNA(fMet) aminoacylation. The sequence is that of Methionine--tRNA ligase (metG) from Deinococcus radiodurans (strain ATCC 13939 / DSM 20539 / JCM 16871 / CCUG 27074 / LMG 4051 / NBRC 15346 / NCIMB 9279 / VKM B-1422 / R1).